Here is a 36-residue protein sequence, read N- to C-terminus: Alpha-amylase inhibitor AI-3688 (36 aa).

Residues cysteine 9 and cysteine 25 are joined by a disulfide bond.

Inhibits mammalian alpha-amylases specifically but has no action on plant and microbial alpha-amylases. The polypeptide is Alpha-amylase inhibitor AI-3688 (Kitasatospora aureofaciens (Streptomyces aureofaciens)).